Reading from the N-terminus, the 790-residue chain is Polyribonucleotide nucleotidyltransferase (790 aa).

Residues Asp-498 and Asp-504 each contribute to the Mg(2+) site. A KH domain is found at 565–624 (PRILRIKIKPEQIGEVIGPGGRVIRAIQEQTGTKISIEEDGTVFISAANEDAARRAVREI). Positions 634 to 702 (GEIFYGRVVT…PDGKINLSRK (69 aa)) constitute an S1 motif domain. The interval 710 to 790 (AERAATAQAP…KELLGEDEPN (81 aa)) is disordered. Positions 739–755 (PERRPGPPTPRRPEQRG) are enriched in basic and acidic residues. Residues 757-772 (SRPPRPQAQRSTPPPG) are compositionally biased toward pro residues.

This sequence belongs to the polyribonucleotide nucleotidyltransferase family. The cofactor is Mg(2+).

It is found in the cytoplasm. It carries out the reaction RNA(n+1) + phosphate = RNA(n) + a ribonucleoside 5'-diphosphate. Its function is as follows. Involved in mRNA degradation. Catalyzes the phosphorolysis of single-stranded polyribonucleotides processively in the 3'- to 5'-direction. The protein is Polyribonucleotide nucleotidyltransferase of Thermomicrobium roseum (strain ATCC 27502 / DSM 5159 / P-2).